We begin with the raw amino-acid sequence, 537 residues long: Copine-3 (537 aa).

2 C2 domains span residues 1-115 (MAAQ…TRPL) and 124-247 (GKGS…PVEF). Phosphoserine is present on S14. Ca(2+) is bound by residues D22, D28, D81, D83, D93, D154, and D160. S197 carries the post-translational modification Phosphoserine. Positions 216, 218, and 224 each coordinate Ca(2+). S243 is modified (phosphoserine). A VWFA domain is found at 291-513 (NFTVGVDFTG…AQCVLAEIPQ (223 aa)).

This sequence belongs to the copine family. As to quaternary structure, monomer. Interacts with ERBB2 (preferentially with the tyrosine phosphorylated form); this interaction occurs at the cell membrane and is increased in a growth factor heregulin-dependent manner. Interacts with SHC1; this interaction may mediate the binding of CPNE3 with ERBB2. Interacts with RACK1. Requires Ca(2+) as cofactor. Post-translationally, phosphorylated on serine and threonine residues. As to expression, expressed in breast and weakly in prostate and ovarian tissues. Expressed in neutrophils (at protein level). Widely expressed. Expressed in the brain. Expressed in neutrophil precursors from the bone marrow and peripheral blood. Expressed in primary breast tumors and ovarian endometrioid adenocarcinoma.

Its subcellular location is the nucleus. The protein localises to the cytoplasm. It is found in the cell membrane. The protein resides in the cell junction. It localises to the focal adhesion. Functionally, calcium-dependent phospholipid-binding protein that plays a role in ERBB2-mediated tumor cell migration in response to growth factor heregulin stimulation. This is Copine-3 from Homo sapiens (Human).